The sequence spans 860 residues: Eukaryotic translation initiation factor 3 subunit C (860 aa).

Positions methionine 1–valine 76 are disordered. Acidic residues predominate over residues serine 10–aspartate 51. Residues phenylalanine 599–glutamate 773 enclose the PCI domain. A disordered region spans residues arginine 812 to alanine 860. Residues glycine 817 to arginine 831 show a composition bias toward gly residues. The segment covering glycine 832–glycine 846 has biased composition (low complexity). Over residues glutamine 847–alanine 860 the composition is skewed to gly residues.

This sequence belongs to the eIF-3 subunit C family. As to quaternary structure, component of the eukaryotic translation initiation factor 3 (eIF-3) complex.

It is found in the cytoplasm. Its function is as follows. Component of the eukaryotic translation initiation factor 3 (eIF-3) complex, which is involved in protein synthesis of a specialized repertoire of mRNAs and, together with other initiation factors, stimulates binding of mRNA and methionyl-tRNAi to the 40S ribosome. The eIF-3 complex specifically targets and initiates translation of a subset of mRNAs involved in cell proliferation. This Emericella nidulans (strain FGSC A4 / ATCC 38163 / CBS 112.46 / NRRL 194 / M139) (Aspergillus nidulans) protein is Eukaryotic translation initiation factor 3 subunit C (nip1).